A 504-amino-acid polypeptide reads, in one-letter code: Paired zinc finger protein 1 (504 aa).

C2H2-type zinc fingers lie at residues 12–35 (LLCG…RQRH) and 39–62 (HMCL…KNKH). The segment at 68-91 (FICVCCNWSFGTEIYLKCHEECMK) adopts a C2H2-type 3; degenerate zinc-finger fold. Disordered stretches follow at residues 115-136 (ALNT…SPVP) and 154-173 (IESA…LVSG). A compositionally biased stretch (polar residues) spans 159–172 (RSSASTSTPRTLVS). 2 consecutive C2H2-type zinc fingers follow at residues 179 to 202 (IPCG…RRFH) and 206 to 229 (HTCL…KSQH). The C2H2-type 6; degenerate zinc-finger motif lies at 235–258 (YNCLCCNWTFLNQVHLISHKTCLK). The C2H2-type 7 zinc-finger motif lies at 309–332 (LSCKSCGKFFYSERSLSKHHRQIH). The C2H2-type 8; degenerate zinc-finger motif lies at 365–389 (FNCRCCNWSFATRRCLMSHVECLKK).

As to expression, expressed in proximal gonad.

Possible transcriptional regulator. Involved in promoting segregation of chromosomes during meiosis, perhaps acting downstream of the let-60 RAS / mpk-1 MAPK signaling pathway. This is Paired zinc finger protein 1 from Caenorhabditis elegans.